Here is a 334-residue protein sequence, read N- to C-terminus: Ornithine carbamoyltransferase (334 aa).

Residues 56 to 59 (STRT), glutamine 83, arginine 107, and 134 to 137 (HPTQ) contribute to the carbamoyl phosphate site. Residues asparagine 168, aspartate 232, and 236 to 237 (SM) contribute to the L-ornithine site. Carbamoyl phosphate is bound by residues 274–275 (CL) and arginine 320.

It belongs to the aspartate/ornithine carbamoyltransferase superfamily. OTCase family.

It localises to the cytoplasm. The enzyme catalyses carbamoyl phosphate + L-ornithine = L-citrulline + phosphate + H(+). It functions in the pathway amino-acid biosynthesis; L-arginine biosynthesis; L-arginine from L-ornithine and carbamoyl phosphate: step 1/3. Functionally, reversibly catalyzes the transfer of the carbamoyl group from carbamoyl phosphate (CP) to the N(epsilon) atom of ornithine (ORN) to produce L-citrulline. This chain is Ornithine carbamoyltransferase, found in Escherichia coli (strain 55989 / EAEC).